The primary structure comprises 273 residues: 2,3,4,5-tetrahydropyridine-2,6-dicarboxylate N-succinyltransferase (273 aa).

The substrate site is built by arginine 104 and aspartate 141.

This sequence belongs to the transferase hexapeptide repeat family. Homotrimer.

Its subcellular location is the cytoplasm. The enzyme catalyses (S)-2,3,4,5-tetrahydrodipicolinate + succinyl-CoA + H2O = (S)-2-succinylamino-6-oxoheptanedioate + CoA. Its pathway is amino-acid biosynthesis; L-lysine biosynthesis via DAP pathway; LL-2,6-diaminopimelate from (S)-tetrahydrodipicolinate (succinylase route): step 1/3. The polypeptide is 2,3,4,5-tetrahydropyridine-2,6-dicarboxylate N-succinyltransferase (Nitrosococcus oceani (strain ATCC 19707 / BCRC 17464 / JCM 30415 / NCIMB 11848 / C-107)).